We begin with the raw amino-acid sequence, 273 residues long: Dermonecrotic toxin LspaSicTox-alphaIA2iii (273 aa).

His5 is an active-site residue. Mg(2+)-binding residues include Glu25 and Asp27. The active-site Nucleophile is the His41. 2 disulfide bridges follow: Cys45/Cys51 and Cys47/Cys190. Asp85 is a Mg(2+) binding site.

This sequence belongs to the arthropod phospholipase D family. Class II subfamily. Requires Mg(2+) as cofactor. Expressed by the venom gland.

It is found in the secreted. It catalyses the reaction an N-(acyl)-sphingosylphosphocholine = an N-(acyl)-sphingosyl-1,3-cyclic phosphate + choline. It carries out the reaction an N-(acyl)-sphingosylphosphoethanolamine = an N-(acyl)-sphingosyl-1,3-cyclic phosphate + ethanolamine. The enzyme catalyses a 1-acyl-sn-glycero-3-phosphocholine = a 1-acyl-sn-glycero-2,3-cyclic phosphate + choline. The catalysed reaction is a 1-acyl-sn-glycero-3-phosphoethanolamine = a 1-acyl-sn-glycero-2,3-cyclic phosphate + ethanolamine. In terms of biological role, dermonecrotic toxins cleave the phosphodiester linkage between the phosphate and headgroup of certain phospholipids (sphingolipid and lysolipid substrates), forming an alcohol (often choline) and a cyclic phosphate. This toxin acts on sphingomyelin (SM). It may also act on ceramide phosphoethanolamine (CPE), lysophosphatidylcholine (LPC) and lysophosphatidylethanolamine (LPE), but not on lysophosphatidylserine (LPS), and lysophosphatidylglycerol (LPG). It acts by transphosphatidylation, releasing exclusively cyclic phosphate products as second products. Induces dermonecrosis, hemolysis, increased vascular permeability, edema, inflammatory response, and platelet aggregation. The polypeptide is Dermonecrotic toxin LspaSicTox-alphaIA2iii (Loxosceles spadicea (Recluse spider)).